The chain runs to 129 residues: Transcription antitermination protein NusB (129 aa).

It belongs to the NusB family.

In terms of biological role, involved in transcription antitermination. Required for transcription of ribosomal RNA (rRNA) genes. Binds specifically to the boxA antiterminator sequence of the ribosomal RNA (rrn) operons. This Bacillus licheniformis (strain ATCC 14580 / DSM 13 / JCM 2505 / CCUG 7422 / NBRC 12200 / NCIMB 9375 / NCTC 10341 / NRRL NRS-1264 / Gibson 46) protein is Transcription antitermination protein NusB.